A 224-amino-acid polypeptide reads, in one-letter code: Probable C-&gt;U-editing enzyme APOBEC-2 (224 aa).

Positions 1–25 (MAQKEEAAAAAEPASQNGEEVENLE) are disordered. 2 residues coordinate Zn(2+): Glu60 and His98. Residues 64–169 (GRNKTFLCYV…PEIQAALRKL (106 aa)) enclose the CMP/dCMP-type deaminase domain. Glu100 functions as the Proton donor in the catalytic mechanism. Cys128 and Cys131 together coordinate Zn(2+).

Belongs to the cytidine and deoxycytidylate deaminase family. In terms of assembly, homotetramer. It depends on Zn(2+) as a cofactor.

It catalyses the reaction cytidine(6666) in apoB mRNA + H2O + H(+) = uridine(6666) in apoB mRNA + NH4(+). Its function is as follows. Probable C to U editing enzyme whose physiological substrate is not yet known. Does not display detectable apoB mRNA editing. Has a low intrinsic cytidine deaminase activity. May play a role in the epigenetic regulation of gene expression through the process of active DNA demethylation. This is Probable C-&gt;U-editing enzyme APOBEC-2 (APOBEC2) from Bos taurus (Bovine).